The chain runs to 187 residues: Ribosome-recycling factor (187 aa).

Belongs to the RRF family.

It is found in the cytoplasm. Functionally, responsible for the release of ribosomes from messenger RNA at the termination of protein biosynthesis. May increase the efficiency of translation by recycling ribosomes from one round of translation to another. The protein is Ribosome-recycling factor of Flavobacterium psychrophilum (strain ATCC 49511 / DSM 21280 / CIP 103535 / JIP02/86).